Reading from the N-terminus, the 296-residue chain is Nitrogenase iron protein (296 aa).

10–17 (GKGGIGKS) is a binding site for ATP. Cys-98 provides a ligand contact to [4Fe-4S] cluster. Arg-101 is modified (ADP-ribosylarginine; by dinitrogenase reductase ADP-ribosyltransferase). Residue Cys-133 coordinates [4Fe-4S] cluster.

It belongs to the NifH/BchL/ChlL family. In terms of assembly, homodimer. It depends on [4Fe-4S] cluster as a cofactor. The reversible ADP-ribosylation of Arg-101 inactivates the nitrogenase reductase and regulates nitrogenase activity.

The catalysed reaction is N2 + 8 reduced [2Fe-2S]-[ferredoxin] + 16 ATP + 16 H2O = H2 + 8 oxidized [2Fe-2S]-[ferredoxin] + 2 NH4(+) + 16 ADP + 16 phosphate + 6 H(+). Functionally, the key enzymatic reactions in nitrogen fixation are catalyzed by the nitrogenase complex, which has 2 components: the iron protein and the molybdenum-iron protein. The chain is Nitrogenase iron protein from Magnetococcus marinus (strain ATCC BAA-1437 / JCM 17883 / MC-1).